We begin with the raw amino-acid sequence, 350 residues long: Anthranilate phosphoribosyltransferase (350 aa).

Residues Gly82, 85–86 (GD), Ser90, 92–95 (NVST), 110–118 (KHGNRAVTG), and Gly122 each bind 5-phospho-alpha-D-ribose 1-diphosphate. Gly82 is a binding site for anthranilate. Ser94 contacts Mg(2+). Position 113 (Asn113) interacts with anthranilate. Arg168 is an anthranilate binding site. Residues Asp232 and Glu233 each coordinate Mg(2+).

It belongs to the anthranilate phosphoribosyltransferase family. In terms of assembly, homodimer. Mg(2+) is required as a cofactor.

The catalysed reaction is N-(5-phospho-beta-D-ribosyl)anthranilate + diphosphate = 5-phospho-alpha-D-ribose 1-diphosphate + anthranilate. Its pathway is amino-acid biosynthesis; L-tryptophan biosynthesis; L-tryptophan from chorismate: step 2/5. Catalyzes the transfer of the phosphoribosyl group of 5-phosphorylribose-1-pyrophosphate (PRPP) to anthranilate to yield N-(5'-phosphoribosyl)-anthranilate (PRA). This is Anthranilate phosphoribosyltransferase from Methanothermobacter marburgensis (strain ATCC BAA-927 / DSM 2133 / JCM 14651 / NBRC 100331 / OCM 82 / Marburg) (Methanobacterium thermoautotrophicum).